A 187-amino-acid polypeptide reads, in one-letter code: UPF0200 protein MA_4660 (187 aa).

An ATP-binding site is contributed by Gly9–Ser16.

Belongs to the UPF0200 family.

This is UPF0200 protein MA_4660 from Methanosarcina acetivorans (strain ATCC 35395 / DSM 2834 / JCM 12185 / C2A).